The sequence spans 576 residues: Putative ankyrin repeat protein L86 (576 aa).

ANK repeat units lie at residues 68–101, 118–147, 159–188, 192–223, 227–260, 264–300, 304–337, 341–373, 377–408, 412–446, and 448–480; these read HGWT…DPNI, TRIN…NVNF, SGGF…NPNI, KGNT…DLNS, KRKT…NPNI, KGNT…NPNI, SGIS…DPNI, QGLT…DPNI, KGKN…NPNA, KGRT…SLTD, and NGKK…TFDV.

This Acanthamoeba polyphaga mimivirus (APMV) protein is Putative ankyrin repeat protein L86.